The sequence spans 111 residues: Flagellar hook-basal body complex protein FliE (111 aa).

It belongs to the FliE family.

It localises to the bacterial flagellum basal body. The protein is Flagellar hook-basal body complex protein FliE of Sinorhizobium fredii (strain NBRC 101917 / NGR234).